The sequence spans 330 residues: uncharacterized protein (330 aa).

125 to 132 (GPPGCGKT) contacts ATP.

The protein belongs to the AAA ATPase family.

This is an uncharacterized protein from Sinorhizobium fredii (strain NBRC 101917 / NGR234).